Here is a 141-residue protein sequence, read N- to C-terminus: Large ribosomal subunit protein uL16 (141 aa).

Belongs to the universal ribosomal protein uL16 family. In terms of assembly, part of the 50S ribosomal subunit.

In terms of biological role, binds 23S rRNA and is also seen to make contacts with the A and possibly P site tRNAs. In Campylobacter fetus subsp. fetus (strain 82-40), this protein is Large ribosomal subunit protein uL16.